We begin with the raw amino-acid sequence, 148 residues long: WAP four-disulfide core domain protein 12 (148 aa).

The N-terminal stretch at 1-23 (MRSYSFWFLTAFLVFATLALGEA) is a signal peptide. Residues 27–74 (GKEKWGNCPAEKGSCIKSGPSQCHADNDCPGDKKCCFLSCSFKCVSPD) enclose the WAP domain. 4 disulfides stabilise this stretch: C34–C62, C41–C66, C49–C61, and C55–C70. The segment at 74–148 (DRIRKEGGNE…QEASPQKEWS (75 aa)) is disordered.

It localises to the secreted. In terms of biological role, antibacterial protein. Putative acid-stable proteinase inhibitor. The chain is WAP four-disulfide core domain protein 12 (WFDC12) from Lemur catta (Ring-tailed lemur).